We begin with the raw amino-acid sequence, 363 residues long: Ribosome-binding ATPase YchF (363 aa).

One can recognise an OBG-type G domain in the interval 3-256; that stretch reads FKCGIVGLPN…LDDDEKIEFL (254 aa). 12–17 serves as a coordination point for ATP; the sequence is NVGKST. Residues serine 16 and threonine 36 each contribute to the Mg(2+) site. The TGS domain occupies 278 to 361; sequence NLQTYFTAGV…QDGDVMHFRF (84 aa).

Belongs to the TRAFAC class OBG-HflX-like GTPase superfamily. OBG GTPase family. YchF/OLA1 subfamily. Mg(2+) serves as cofactor.

Functionally, ATPase that binds to both the 70S ribosome and the 50S ribosomal subunit in a nucleotide-independent manner. The polypeptide is Ribosome-binding ATPase YchF (Pasteurella multocida (strain Pm70)).